Reading from the N-terminus, the 709-residue chain is Septu protein PtuA (709 aa).

In terms of biological role, component of antiviral defense system Septu type II, composed of PtuA and PtuB. Expression of Septu type II in B.subtilis (strain BEST7003) confers resistance to phages SBSphiC and SpBeta. May be an ATPase. The polypeptide is Septu protein PtuA (Bacillus mycoides (strain KBAB4) (Bacillus weihenstephanensis)).